A 654-amino-acid chain; its full sequence is Fructose-1,6-bisphosphatase class 3 (654 aa).

Residues 288 to 307 (NPAFKPKKRPDKHERLTQRE) are disordered. Residues 298–307 (DKHERLTQRE) are compositionally biased toward basic and acidic residues.

It belongs to the FBPase class 3 family. It depends on Mn(2+) as a cofactor.

It carries out the reaction beta-D-fructose 1,6-bisphosphate + H2O = beta-D-fructose 6-phosphate + phosphate. It functions in the pathway carbohydrate biosynthesis; gluconeogenesis. The polypeptide is Fructose-1,6-bisphosphatase class 3 (Staphylococcus aureus (strain bovine RF122 / ET3-1)).